A 120-amino-acid chain; its full sequence is uncharacterized protein (120 aa).

2 N-linked (GlcNAc...) asparagine; by host glycosylation sites follow: Asn29 and Asn68. The helical transmembrane segment at 74-94 threads the bilayer; sequence IFNGLGFILIVIFIYLLIITL.

The protein belongs to the asfivirus B117L family.

The protein resides in the host membrane. The protein localises to the virion. This is an uncharacterized protein from Ornithodoros (relapsing fever ticks).